Reading from the N-terminus, the 93-residue chain is YcgL domain-containing protein swp_2294 (93 aa).

Residues 1–85 (MICAVYKSLR…PVVNLLEQHK (85 aa)) enclose the YcgL domain.

This is YcgL domain-containing protein swp_2294 from Shewanella piezotolerans (strain WP3 / JCM 13877).